A 211-amino-acid polypeptide reads, in one-letter code: Small ribosomal subunit protein eS1 (211 aa).

Positions 192–211 (NGLPPYEAVGDRATPELASY) are disordered.

It belongs to the eukaryotic ribosomal protein eS1 family.

The polypeptide is Small ribosomal subunit protein eS1 (Methanopyrus kandleri (strain AV19 / DSM 6324 / JCM 9639 / NBRC 100938)).